Here is a 415-residue protein sequence, read N- to C-terminus: Gamma-glutamyl phosphate reductase (415 aa).

This sequence belongs to the gamma-glutamyl phosphate reductase family.

It localises to the cytoplasm. The enzyme catalyses L-glutamate 5-semialdehyde + phosphate + NADP(+) = L-glutamyl 5-phosphate + NADPH + H(+). It functions in the pathway amino-acid biosynthesis; L-proline biosynthesis; L-glutamate 5-semialdehyde from L-glutamate: step 2/2. Catalyzes the NADPH-dependent reduction of L-glutamate 5-phosphate into L-glutamate 5-semialdehyde and phosphate. The product spontaneously undergoes cyclization to form 1-pyrroline-5-carboxylate. The polypeptide is Gamma-glutamyl phosphate reductase (Mycolicibacterium gilvum (strain PYR-GCK) (Mycobacterium gilvum (strain PYR-GCK))).